The sequence spans 388 residues: Pepsin A-1 (388 aa).

Positions 1–15 (MKWLLLLGLVALSEC) are cleaved as a signal peptide. 2 propeptides (activation peptide) span residues 16 to 40 (IIYK…LLKD) and 41 to 62 (FLKK…APTL). The region spanning 76–385 (YFGTIGIGTP…DRANNQVGLA (310 aa)) is the Peptidase A1 domain. Asp-94 is an active-site residue. An intrachain disulfide couples Cys-107 to Cys-112. Phosphoserine is present on Ser-130. The cysteines at positions 268 and 272 are disulfide-linked. Residue Asp-277 is part of the active site. Residues Cys-311 and Cys-344 are joined by a disulfide bond.

The protein belongs to the peptidase A1 family. In terms of processing, each pepsinogen is converted to corresponding pepsin at pH 2.0 in part as a result of the release of a 47 AA activation segment and in part as a result of stepwise proteolytic cleavage via an intermediate form(s).

It is found in the secreted. It catalyses the reaction Preferential cleavage: hydrophobic, preferably aromatic, residues in P1 and P1' positions. Cleaves 1-Phe-|-Val-2, 4-Gln-|-His-5, 13-Glu-|-Ala-14, 14-Ala-|-Leu-15, 15-Leu-|-Tyr-16, 16-Tyr-|-Leu-17, 23-Gly-|-Phe-24, 24-Phe-|-Phe-25 and 25-Phe-|-Tyr-26 bonds in the B chain of insulin.. Shows particularly broad specificity; although bonds involving phenylalanine and leucine are preferred, many others are also cleaved to some extent. This Macaca fuscata fuscata (Japanese macaque) protein is Pepsin A-1 (PGA).